The sequence spans 102 residues: Cytochrome b (102 aa).

3 helical membrane-spanning segments follow: residues 1 to 21 (FGSL…FLAM), 45 to 66 (WLMR…FLHI), and 81 to 101 (WNIG…GYVL). His-51 and His-65 together coordinate heme b.

The protein belongs to the cytochrome b family. As to quaternary structure, the cytochrome bc1 complex contains 3 respiratory subunits (MT-CYB, CYC1 and UQCRFS1), 2 core proteins (UQCRC1 and UQCRC2) and probably 6 low-molecular weight proteins. Heme b serves as cofactor.

The protein localises to the mitochondrion inner membrane. Its function is as follows. Component of the ubiquinol-cytochrome c reductase complex (complex III or cytochrome b-c1 complex) that is part of the mitochondrial respiratory chain. The b-c1 complex mediates electron transfer from ubiquinol to cytochrome c. Contributes to the generation of a proton gradient across the mitochondrial membrane that is then used for ATP synthesis. This Ambystoma tigrinum (Eastern tiger salamander) protein is Cytochrome b (mt-cyb).